Reading from the N-terminus, the 499-residue chain is Laccase (499 aa).

2 consecutive Plastocyanin-like domains span residues Val2–Tyr127 and Val139–Tyr281. N-linked (GlcNAc...) asparagine glycans are attached at residues Asn51 and Asn54. Positions 64, 66, 109, and 111 each coordinate Cu cation. 2 disulfides stabilise this stretch: Cys85-Cys488 and Cys117-Cys205. Tyr196 carries the 3'-nitrotyrosine modification. Asn208, Asn217, Asn292, and Asn333 each carry an N-linked (GlcNAc...) asparagine glycan. The 123-residue stretch at Ser348 to Asp470 folds into the Plastocyanin-like 3 domain. Position 372 is a 3'-nitrotyrosine (Tyr372). N-linked (GlcNAc...) asparagine glycosylation occurs at Asn377. Residues His395, His398, and His400 each coordinate Cu cation. Residues Asn416 and Asn436 are each glycosylated (N-linked (GlcNAc...) asparagine). Cu cation-binding residues include His452, Cys453, His454, and His458.

It belongs to the multicopper oxidase family. It depends on Cu cation as a cofactor.

Its subcellular location is the secreted. It carries out the reaction 4 hydroquinone + O2 = 4 benzosemiquinone + 2 H2O. In terms of biological role, lignin degradation and detoxification of lignin-derived products. This chain is Laccase, found in Trametes maxima (White-rot fungus).